Consider the following 485-residue polypeptide: Polyol:NADP oxidoreductase (485 aa).

Belongs to the mannitol dehydrogenase family.

Its subcellular location is the cytoplasm. In Gluconobacter oxydans (strain 621H) (Gluconobacter suboxydans), this protein is Polyol:NADP oxidoreductase (por).